A 511-amino-acid chain; its full sequence is Protoheme IX farnesyltransferase, mitochondrial (511 aa).

The transit peptide at 1-23 directs the protein to the mitochondrion; the sequence is MSSSTESLPGTLRRTLTTSRAPA. Disordered stretches follow at residues 1–27 and 50–136; these read MSSS…ATSS and HDSA…LAPD. 3 stretches are compositionally biased toward low complexity: residues 52-79, 104-115, and 126-136; these read SASS…SSTT, RKAAAAAAAAAA, and PDAPTADLAPD. Helical transmembrane passes span 168–188, 197–217, 253–273, 275–295, 303–323, 344–364, 398–418, and 444–464; these read LTVL…VPSF, SLAP…TTLC, AAVL…YFGV, PTVS…YTPL, TWVG…AAAG, LGGW…FMPL, AFIP…SFAV, and ARGL…LALA.

Belongs to the UbiA prenyltransferase family.

The protein resides in the mitochondrion membrane. Its function is as follows. Converts protoheme IX and farnesyl diphosphate to heme O. This Neurospora crassa (strain ATCC 24698 / 74-OR23-1A / CBS 708.71 / DSM 1257 / FGSC 987) protein is Protoheme IX farnesyltransferase, mitochondrial (pft-1).